The following is a 479-amino-acid chain: MRKPAFGVSALLIALTLGACSMAPTYERPAAPVADSWSGAAAQRQGAAIDTLDWKSFIVDAELRRLVDMALDNNRSLRQTLLDIEAARAQYRIQRADRVPGLNAAATGNRQRQPADLSAGNRSEVASSYQVGLALPEYELDLFGRVKSLTDAALQQYLASEEAARAARIALVAEVSQAYLSYDGALRRLALTRQTLVSREYSFALIDQRRAAGAATALDYQEALGLVEQARAEQERNLRQKQQAFNALVLLLGSDDAAQAIPRSPGQRPKLLQDIAPGTPSELIERRPDILAAEHRLRARNADIGAARAAFFPRISLTGSFGTSSAEMSGLFDGGSRSWSFLPTLTLPIFDGGRNRANLSLAEARKDSAVAAYEGTIQTAFREVADALAASDTLRREEKALRALANSSNEALKLAKARYESGVDNHLRYLDAQRSSFLNEIAFIDGSTQRQIALVDLFRALGGGWDEGRSLVVHRGGRS.

The N-terminal stretch at methionine 1–alanine 19 is a signal peptide. A lipid anchor (N-palmitoyl cysteine) is attached at cysteine 20. Residue cysteine 20 is the site of S-diacylglycerol cysteine attachment. The segment at leucine 102–asparagine 121 is disordered.

The protein belongs to the outer membrane factor (OMF) (TC 1.B.17) family.

It localises to the cell outer membrane. Functionally, channel-forming component of a multidrug resistance efflux pump. This is Outer membrane protein OprJ (oprJ) from Pseudomonas aeruginosa (strain ATCC 15692 / DSM 22644 / CIP 104116 / JCM 14847 / LMG 12228 / 1C / PRS 101 / PAO1).